The sequence spans 489 residues: Betaine aldehyde dehydrogenase (489 aa).

K(+) is bound by residues threonine 26 and aspartate 93. Position 150–152 (150–152 (GAW)) interacts with NAD(+). Lysine 162 acts as the Charge relay system in catalysis. 176 to 179 (KPSE) is a binding site for NAD(+). Valine 180 lines the K(+) pocket. An NAD(+)-binding site is contributed by 229 to 232 (GVET). Residue leucine 245 coordinates K(+). Glutamate 251 acts as the Proton acceptor in catalysis. Glycine 253, cysteine 285, and glutamate 386 together coordinate NAD(+). Cysteine 285 functions as the Nucleophile in the catalytic mechanism. Position 285 is a cysteine sulfenic acid (-SOH) (cysteine 285). K(+) contacts are provided by lysine 456 and glycine 459. Glutamate 463 serves as the catalytic Charge relay system.

Belongs to the aldehyde dehydrogenase family. As to quaternary structure, dimer of dimers. The cofactor is K(+).

It carries out the reaction betaine aldehyde + NAD(+) + H2O = glycine betaine + NADH + 2 H(+). It participates in amine and polyamine biosynthesis; betaine biosynthesis via choline pathway; betaine from betaine aldehyde: step 1/1. In terms of biological role, involved in the biosynthesis of the osmoprotectant glycine betaine. Catalyzes the irreversible oxidation of betaine aldehyde to the corresponding acid. This Burkholderia lata (strain ATCC 17760 / DSM 23089 / LMG 22485 / NCIMB 9086 / R18194 / 383) protein is Betaine aldehyde dehydrogenase.